The following is a 248-amino-acid chain: Triosephosphate isomerase (248 aa).

Substrate contacts are provided by Asn10 and Lys12. Residue His95 is the Electrophile of the active site. Catalysis depends on Glu165, which acts as the Proton acceptor.

This sequence belongs to the triosephosphate isomerase family. Homodimer.

The catalysed reaction is D-glyceraldehyde 3-phosphate = dihydroxyacetone phosphate. The protein operates within carbohydrate biosynthesis; gluconeogenesis. It functions in the pathway carbohydrate degradation; glycolysis; D-glyceraldehyde 3-phosphate from glycerone phosphate: step 1/1. The polypeptide is Triosephosphate isomerase (TPI1) (Zygosaccharomyces bailii).